The chain runs to 460 residues: ATP synthase subunit beta (460 aa).

150–157 (GGAGVGKT) is a binding site for ATP.

The protein belongs to the ATPase alpha/beta chains family. F-type ATPases have 2 components, CF(1) - the catalytic core - and CF(0) - the membrane proton channel. CF(1) has five subunits: alpha(3), beta(3), gamma(1), delta(1), epsilon(1). CF(0) has three main subunits: a(1), b(2) and c(9-12). The alpha and beta chains form an alternating ring which encloses part of the gamma chain. CF(1) is attached to CF(0) by a central stalk formed by the gamma and epsilon chains, while a peripheral stalk is formed by the delta and b chains.

The protein localises to the cell inner membrane. It carries out the reaction ATP + H2O + 4 H(+)(in) = ADP + phosphate + 5 H(+)(out). In terms of biological role, produces ATP from ADP in the presence of a proton gradient across the membrane. The catalytic sites are hosted primarily by the beta subunits. The polypeptide is ATP synthase subunit beta (Erwinia tasmaniensis (strain DSM 17950 / CFBP 7177 / CIP 109463 / NCPPB 4357 / Et1/99)).